The primary structure comprises 720 residues: Fatty acid CoA ligase Acsl3 (720 aa).

Residues Ile21–Phe41 form a helical; Signal-anchor for type III membrane protein membrane-spanning segment. Residues Tyr42–Lys720 lie on the Cytoplasmic side of the membrane. Ser683 carries the post-translational modification Phosphoserine.

It belongs to the ATP-dependent AMP-binding enzyme family. It depends on Mg(2+) as a cofactor.

The protein resides in the mitochondrion outer membrane. Its subcellular location is the peroxisome membrane. It is found in the microsome membrane. It localises to the endoplasmic reticulum membrane. The enzyme catalyses a long-chain fatty acid + ATP + CoA = a long-chain fatty acyl-CoA + AMP + diphosphate. The catalysed reaction is (5Z,8Z,11Z,14Z)-eicosatetraenoate + ATP + CoA = (5Z,8Z,11Z,14Z)-eicosatetraenoyl-CoA + AMP + diphosphate. It catalyses the reaction (E)-hexadec-2-enoate + ATP + CoA = (2E)-hexadecenoyl-CoA + AMP + diphosphate. It carries out the reaction 15-hydroxy-(5Z,8Z,11Z,13E)-eicosatetraenoate + ATP + CoA = 15-hydroxy-(5Z,8Z,11Z,13E)-eicosatetraenoyl-CoA + AMP + diphosphate. The enzyme catalyses 12-hydroxy-(5Z,8Z,10E,14Z)-eicosatetraenoate + ATP + CoA = 12-hydroxy-(5Z,8Z,10E,14Z)-eicosatetraenoyl-CoA + AMP + diphosphate. The catalysed reaction is 5-hydroxy-(6E,8Z,11Z,14Z)-eicosatetraenoate + ATP + CoA = 5-hydroxy-(6E,8Z,11Z,14Z)-eicosatetraenoyl-CoA + AMP + diphosphate. It catalyses the reaction 14,15-epoxy-(5Z,8Z,11Z)-eicosatrienoate + ATP + CoA = 14,15-epoxy-(5Z,8Z,11Z)-eicosatrienoyl-CoA + AMP + diphosphate. It carries out the reaction 11,12-epoxy-(5Z,8Z,14Z)-eicosatrienoate + ATP + CoA = 11,12-epoxy-(5Z,8Z,14Z)-eicosatrienoyl-CoA + AMP + diphosphate. The enzyme catalyses a medium-chain fatty acid + ATP + CoA = a medium-chain fatty acyl-CoA + AMP + diphosphate. The catalysed reaction is hexadecanoate + ATP + CoA = hexadecanoyl-CoA + AMP + diphosphate. It catalyses the reaction tetradecanoate + ATP + CoA = tetradecanoyl-CoA + AMP + diphosphate. It carries out the reaction dodecanoate + ATP + CoA = dodecanoyl-CoA + AMP + diphosphate. The enzyme catalyses octadecanoate + ATP + CoA = octadecanoyl-CoA + AMP + diphosphate. The catalysed reaction is eicosanoate + ATP + CoA = eicosanoyl-CoA + AMP + diphosphate. It catalyses the reaction (9Z)-octadecenoate + ATP + CoA = (9Z)-octadecenoyl-CoA + AMP + diphosphate. It carries out the reaction (9Z)-hexadecenoate + ATP + CoA = (9Z)-hexadecenoyl-CoA + AMP + diphosphate. The enzyme catalyses (9Z,12Z)-octadecadienoate + ATP + CoA = (9Z,12Z)-octadecadienoyl-CoA + AMP + diphosphate. The catalysed reaction is (9Z,12Z,15Z)-octadecatrienoate + ATP + CoA = (9Z,12Z,15Z)-octadecatrienoyl-CoA + AMP + diphosphate. It catalyses the reaction (4Z,7Z,10Z,13Z,16Z,19Z)-docosahexaenoate + ATP + CoA = (4Z,7Z,10Z,13Z,16Z,19Z)-docosahexaenoyl-CoA + AMP + diphosphate. It carries out the reaction (5Z,8Z,11Z,14Z,17Z)-eicosapentaenoate + ATP + CoA = (5Z,8Z,11Z,14Z,17Z)-eicosapentaenoyl-CoA + AMP + diphosphate. The enzyme catalyses a fatty acid + ATP + CoA = a fatty acyl-CoA + AMP + diphosphate. In terms of biological role, acyl-CoA synthetases (ACSL) activates long-chain fatty acids for both synthesis of cellular lipids, and degradation via beta-oxidation. Required for the incorporation of fatty acids into phosphatidylcholine, the major phospholipid located on the surface of VLDL (very low density lipoproteins). Has mainly an anabolic role in energy metabolism. Mediates hepatic lipogenesis. Preferentially uses myristate, laurate, arachidonate and eicosapentaenoate as substrates. Both isoforms exhibit the same level of activity. This Homo sapiens (Human) protein is Fatty acid CoA ligase Acsl3.